The sequence spans 398 residues: GTPase Obg (398 aa).

An Obg domain is found at M1 to L159. Residues T128–E148 are disordered. The region spanning A160 to E333 is the OBG-type G domain. GTP-binding positions include G166–S173, F191–V195, D213–G216, N283–D286, and S314–L316. Mg(2+) contacts are provided by S173 and T193.

The protein belongs to the TRAFAC class OBG-HflX-like GTPase superfamily. OBG GTPase family. As to quaternary structure, monomer. It depends on Mg(2+) as a cofactor.

It is found in the cytoplasm. In terms of biological role, an essential GTPase which binds GTP, GDP and possibly (p)ppGpp with moderate affinity, with high nucleotide exchange rates and a fairly low GTP hydrolysis rate. Plays a role in control of the cell cycle, stress response, ribosome biogenesis and in those bacteria that undergo differentiation, in morphogenesis control. The chain is GTPase Obg from Cellvibrio japonicus (strain Ueda107) (Pseudomonas fluorescens subsp. cellulosa).